The sequence spans 422 residues: Isocitrate dehydrogenase [NADP] (422 aa).

Residue Thr94 coordinates NADP(+). Ser103, Asn105, Arg109, Arg119, and Arg143 together coordinate D-threo-isocitrate. Residue Asp310 participates in Mg(2+) binding. Residues 344 to 350 (HGTAPKY), Asn357, Tyr396, and Arg400 contribute to the NADP(+) site.

The protein belongs to the isocitrate and isopropylmalate dehydrogenases family. Homodimer. Requires Mg(2+) as cofactor. Mn(2+) is required as a cofactor.

The enzyme catalyses D-threo-isocitrate + NADP(+) = 2-oxoglutarate + CO2 + NADPH. In terms of biological role, catalyzes the oxidative decarboxylation of isocitrate to 2-oxoglutarate and carbon dioxide with the concomitant reduction of NADP(+). The polypeptide is Isocitrate dehydrogenase [NADP] (icd) (Staphylococcus aureus (strain COL)).